Consider the following 415-residue polypeptide: Lysosome-associated membrane glycoprotein 2 (415 aa).

The N-terminal stretch at 1–25 (MCLSPVKGAKLILIFLFLGAVQSNA) is a signal peptide. Residues 26 to 188 (LIVNLTDSKG…SKNEQVCEED (163 aa)) are first lumenal domain. The Lumenal portion of the chain corresponds to 26–379 (LIVNLTDSKG…AQDCSADEDN (354 aa)). N-linked (GlcNAc...) asparagine glycosylation is found at asparagine 29, asparagine 45, asparagine 54, asparagine 57, asparagine 97, asparagine 115, and asparagine 175. An intrachain disulfide couples cysteine 37 to cysteine 75. Cysteines 149 and 185 form a disulfide. Positions 189–233 (QTPTTVAPIIHTTAPSTTTTLTPTSTPTPTPTPTPTVGNYSIRNG) are hinge. Residues 202-213 (APSTTTTLTPTS) are compositionally biased toward low complexity. A disordered region spans residues 202 to 227 (APSTTTTLTPTSTPTPTPTPTPTVGN). Asparagine 227, asparagine 234, asparagine 247, asparagine 265, asparagine 280, asparagine 312, asparagine 317, asparagine 322, and asparagine 361 each carry an N-linked (GlcNAc...) asparagine glycan. A second lumenal domain region spans residues 234–379 (NTTCLLATMG…AQDCSADEDN (146 aa)). Cysteine 237 and cysteine 270 are joined by a disulfide. Cysteine 336 and cysteine 373 are oxidised to a cystine. Residues 380-404 (FLVPIAVGAALGGVLILVLLAYFIG) traverse the membrane as a helical segment. The Cytoplasmic portion of the chain corresponds to 405 to 415 (LKRHHTGYEQF). Residues 406–409 (KRHH) are important for binding and subsequent lysosomal degradation of target proteins.

Belongs to the LAMP family. As to quaternary structure, monomer. Forms large homooligomers. Interacts (via its cytoplasmic region) with HSPA8; HSPA8 mediates recruitment of proteins with a KFERQ motif to the surface of the lysosome for chaperone-mediated autophagy. Interacts with HSP90 in the lysosome lumen; this enhances LAMP2 stability. Interacts with MLLT11. Interacts with ABCB9. Interacts with FURIN. Interacts with CT55; this interaction may be important for LAMP2 protein stability. Interacts with TMEM175; inhibiting the proton channel activity of TMEM175. Forms a ternary complex with RAB7A and RUFY4 (via RUN domain); the interaction with RAB7A is mediated by RUFY4 (via RUN and coiled coil domains). In terms of processing, extensively N-glycosylated. Contains a minor proportion of O-linked glycans. In terms of tissue distribution, detected in liver and kidney (at protein level). Detected in liver and kidney.

It is found in the lysosome membrane. The protein localises to the endosome membrane. The protein resides in the cytoplasmic vesicle. Its subcellular location is the autophagosome membrane. It localises to the cell membrane. Lysosomal membrane glycoprotein which plays an important role in lysosome biogenesis, lysosomal pH regulation and autophagy. Acts as an important regulator of lysosomal lumen pH regulation by acting as a direct inhibitor of the proton channel TMEM175, facilitating lysosomal acidification for optimal hydrolase activity. Plays an important role in chaperone-mediated autophagy, a process that mediates lysosomal degradation of proteins in response to various stresses and as part of the normal turnover of proteins with a long biological half-live. Functions by binding target proteins, such as GAPDH, NLRP3 and MLLT11, and targeting them for lysosomal degradation. In the chaperone-mediated autophagy, acts downstream of chaperones, such as HSPA8/HSC70, which recognize and bind substrate proteins and mediate their recruitment to lysosomes, where target proteins bind LAMP2. Plays a role in lysosomal protein degradation in response to starvation. Required for the fusion of autophagosomes with lysosomes during autophagy. Cells that lack LAMP2 express normal levels of VAMP8, but fail to accumulate STX17 on autophagosomes, which is the most likely explanation for the lack of fusion between autophagosomes and lysosomes. Required for normal degradation of the contents of autophagosomes. Required for efficient MHC class II-mediated presentation of exogenous antigens via its function in lysosomal protein degradation; antigenic peptides generated by proteases in the endosomal/lysosomal compartment are captured by nascent MHC II subunits. Is not required for efficient MHC class II-mediated presentation of endogenous antigens. This chain is Lysosome-associated membrane glycoprotein 2 (Lamp2), found in Mus musculus (Mouse).